We begin with the raw amino-acid sequence, 473 residues long: Proline--tRNA ligase (473 aa).

Belongs to the class-II aminoacyl-tRNA synthetase family. ProS type 3 subfamily. As to quaternary structure, homodimer.

It is found in the cytoplasm. The catalysed reaction is tRNA(Pro) + L-proline + ATP = L-prolyl-tRNA(Pro) + AMP + diphosphate. Its function is as follows. Catalyzes the attachment of proline to tRNA(Pro) in a two-step reaction: proline is first activated by ATP to form Pro-AMP and then transferred to the acceptor end of tRNA(Pro). This chain is Proline--tRNA ligase, found in Mesoplasma florum (strain ATCC 33453 / NBRC 100688 / NCTC 11704 / L1) (Acholeplasma florum).